Reading from the N-terminus, the 626-residue chain is UvrABC system protein C (626 aa).

The GIY-YIG domain maps to 26–105 (QEPGVYFMGD…IKQHQPHFNV (80 aa)). A UVR domain is found at 215 to 250 (QELHQLLTQQMEKAAADLKFEQAALIRDQINSLGKL).

It belongs to the UvrC family. Interacts with UvrB in an incision complex.

It is found in the cytoplasm. Functionally, the UvrABC repair system catalyzes the recognition and processing of DNA lesions. UvrC both incises the 5' and 3' sides of the lesion. The N-terminal half is responsible for the 3' incision and the C-terminal half is responsible for the 5' incision. The chain is UvrABC system protein C from Synechocystis sp. (strain ATCC 27184 / PCC 6803 / Kazusa).